Consider the following 111-residue polypeptide: COX assembly mitochondrial protein (111 aa).

Residues 39-82 (YKKCANFVQAMADCAKANGMKVFPTCDKQRDEMKSCLLFYQTDE) form the CHCH domain. Short sequence motifs (cx9C motif) lie at residues 42-52 (CANFVQAMADC) and 64-74 (CDKQRDEMKSC). Cystine bridges form between Cys-42–Cys-74 and Cys-52–Cys-64.

Belongs to the CMC family.

The protein localises to the mitochondrion inner membrane. Required for mitochondrial cytochrome c oxidase (COX) assembly and respiration. Binds copper. May be involved in copper trafficking and distribution to mitochondrial COX and SOD1. In Saccharomyces cerevisiae (strain YJM789) (Baker's yeast), this protein is COX assembly mitochondrial protein (CMC1).